The primary structure comprises 358 residues: Dynein axonemal assembly factor 10 (358 aa).

WD repeat units lie at residues 64–106 (EKPK…TPVY), 116–155 (NCIDGVGGVGIGDGAPEIVTGSRDGTVKVWDPRQKDTPVA), 163–206 (EAKR…VRWE), 208–250 (NIKN…PTKG), 258–298 (AHKS…QRSR), and 320–358 (LSTQPISSLDWSPDKKGLCVCTSFDQTVRVLIVTKLNRL).

In terms of assembly, interacts with PIH1D1; the interaction associates DNAAF10 with the R2TP complex. Interacts with several dynein axonemal assembly factors.

It is found in the dynein axonemal particle. Its function is as follows. Key assembly factor specifically required for the stability of axonemal dynein heavy chains in cytoplasm. The polypeptide is Dynein axonemal assembly factor 10 (dnaaf10) (Xenopus laevis (African clawed frog)).